Here is a 2103-residue protein sequence, read N- to C-terminus: MDRFSFDDSIRFEEDSLCSWSSEPESLCNNWRGWKKPAAGSGAGNGGLSGMGGMAVAGGSGAPPFGGAGASGSCTPGGNGTAMANTSTCGRHYEVSTLAELAARCVASYIPFELVEHVYPPVPEQLQLRIAFWSFPDNEEDIRLYSCLANSSADEFNRGDSLFRLRAVKDPLQIGFHLSASVVNQTPRAYFNVAVTFDRRRISSCNCTCTSSAYWCSHVVAVCLHRIHCPQEVCLRAPVSESLTRLQRDQLQKFAQYLISELPQQILPTAQRLLDELLSAQPTAINTVCGAPDPTAGASINDQTSWYLDEKTLHNNIKRILIKFCLPAPIVFSDVNYLTNSAPPAAAEWSSLLRPLRGREPEGMWNLLSIVREMYRRCDRNAVRLLEIITEECLYCDQILIWWFQTKLALMMGSHGHSGGKHSNTHSNSTALQHACSSLCDEIVALWRLAALNPGLAPDERDMLHAQFTAWHLKILDRVVKSRMMPSYTNKHQQNSRSETELFIGFKPAIEACYLDWEGYPIPGVTHTHDTNPIYYSPFTCFKHTDLKGESNNPGQLNATQALMSNNKHYNYFSSSSDHGMHAGAFKQRLDRPFRESRFYTNPADLDGGAALAGGGSGRFSTGLGSVAVGGAGAGGLGQMSGGVNNSVGGSAAAEVNPVQQQLPSGSAGVGASVTNAKVVVATDGNRSSASSEGFCENDDFGGDTSSSHNYCPPGQAVVPGQKSALTESDSQSSFDAVSHQSKDEPPVGGVGVAVGVEQALSTSDTSSASSSSSSASTASGSSNSSTSSMLMAGQEATVGVGGAVQQTTRRLSKDESFSSSSDEFNQGGVGGSAGRVAMASSGSGSGAGDTVAVGSGSTAGGDLTPVPSTSAAARAALAASSTGPVISASPHLAASAAGGLGVLGVGADQPCTSSAHAARALAAAVAASSDKPHVFSNVRPTEDAWDILLARAEGLHAHGHGAEACILAVRLAEQMLANPPNLLLELPPAPKRKGKKQNVNPISHQLTVVASATLSKCAFLCTVLSENSEHYHIGFRICLFALEMPRPPASTKPLEVKLANQEADILALLKRLPLGSAELQVIRERAEQLRSGTFKTRGEALLPINLATFIFDALVTLSPLGGSTIVPGVASTSGVSSAAGKSMVNTGTRLLLYKHNSDESLGFDAAVAALGLKANVSEAEHPLLCEGTRRQRGDLALTLLSHYKDEPRKIAKIMEKLLDRDIHTLLNAPLLPAYYSSNPPVRTRSNQPTRREDHDYGGGSGCASSNCNPVANLCELLPADYGSVGGNSRPHSSTSAELELSMCALSMASSGSQSGGVQGMVPTTNAAGTTGTPSSSSTTVSGSQNPNGNPSGSGGGGNGGGGNGGGGGGGGGGGGSTSSRSKESRYKGKRAYPSIPNQPSEASAHFMFELAKNVLTKAGGNSSTSLFTQASTSQNHHGPHRALHMCAFQLGLYALGLHNCVSPNWLSRTYSSHVSWILGQAMEIGAPAISFLIDTWEAHLTPPEAAGMADRASRGWDSNMVYPAAELALSVLPHAAALNPNEIQRAILQCKEQSDLMLERACLTVETAAKGGGVYPEVLFQVARYWYELYMRNTPNNSEFEPHDDTMDHSAVSLSALIESQQQHELQQQQQAVQQQQAVQQQQQVVQQQQQVVQQQQQLGMPNSVVPGGVGPGPGLPVAVQPPVVGSVQNPQAQFQPVGVASLAPLGLAQYPPYSFCQGLYAHHHNMSYPPGQMQMFISAGPPPPPQAYGGYQQPPPQQPPNPQQQQQVVQQQVQQQQVVQQQQQQVQMAGQAPPGHPGQQGHPGQPPSGFQPQPPPGAFQALPPQAYQAMQAGPPGPPMGPPQGYYGPPPPPPPNGPPGVGVGVGVGVGVGVMPMRQHQHQHPVYPFMQQAPPQPPQQQQPPPSQPPVRQRQPHQFTPTQLRYLLAAYNVGMLAMETLARRVHDDRPQAKYARNPPYGEDVKWLLRISKKLGTQYLHQFCICAVNSIVSPFVLHDVAIESAHYLGRNNHQMVMQHLRSALTPLVQKCQQMYIQCIHQKLYHLTQGDYEEFASIVVAARAAFQITPEGNAQFKDWLQSIKRSKSCKKELWTQINAALQSNSK.

The SWIM-type zinc-finger motif lies at 191–227 (FNVAVTFDRRRISSCNCTCTSSAYWCSHVVAVCLHRI). Disordered stretches follow at residues 684–860 (DGNR…GSTA), 1237–1262 (SSNP…GGSG), 1310–1399 (SSGS…IPNQ), 1735–1772 (MQMF…QVVQ), 1786–1864 (QQVQ…GVGV), and 1888–1916 (PFMQ…RQPH). A compositionally biased stretch (polar residues) spans 724 to 740 (SALTESDSQSSFDAVSH). Composition is skewed to low complexity over residues 754–789 (AVGV…STSS) and 835–857 (GRVA…VGSG). Residues 1237–1249 (SSNPPVRTRSNQP) are compositionally biased toward polar residues. A compositionally biased stretch (low complexity) spans 1320–1351 (GMVPTTNAAGTTGTPSSSSTTVSGSQNPNGNP). Positions 1352-1377 (SGSGGGGNGGGGNGGGGGGGGGGGGS) are enriched in gly residues. The segment covering 1755–1764 (QPPPQQPPNP) has biased composition (pro residues). Low complexity-rich tracts occupy residues 1786–1813 (QQVQ…SGFQ) and 1820–1835 (AFQA…MQAG). 2 stretches are compositionally biased toward pro residues: residues 1836 to 1859 (PPGP…PNGP) and 1894 to 1908 (PPQP…PSQP).

The protein belongs to the ZSWIM8 family. Component of the SCF-like E3 ubiquitin-protein ligase complex.

It functions in the pathway protein modification; protein ubiquitination. Functionally, substrate recognition component of a SCF-like E3 ubiquitin-protein ligase complex that promotes target-directed microRNA degradation (TDMD), a process that mediates degradation of microRNAs (miRNAs). The SCF-like E3 ubiquitin-protein ligase complex acts by catalyzing ubiquitination and subsequent degradation of AGO1, thereby exposing miRNAs for degradation. The sequence is that of Zinc finger SWIM domain-containing protein 8 homolog from Drosophila melanogaster (Fruit fly).